We begin with the raw amino-acid sequence, 61 residues long: uncharacterized protein (61 aa).

The disordered stretch occupies residues 1–40 (MRRGGEPQCDGREFRIASSPAREREDDNETAPPQTSAAQE). The span at 9-25 (CDGREFRIASSPARERE) shows a compositional bias: basic and acidic residues.

This is an uncharacterized protein from Caenorhabditis elegans.